Reading from the N-terminus, the 164-residue chain is Thiol peroxidase (164 aa).

One can recognise a Thioredoxin domain in the interval 18-163; it reads INEGDFAPDF…FDAALAAYKN (146 aa). The active-site Cysteine sulfenic acid (-SOH) intermediate is the Cys-60. Cys-60 and Cys-93 are oxidised to a cystine.

The protein belongs to the peroxiredoxin family. Tpx subfamily. Homodimer.

The catalysed reaction is a hydroperoxide + [thioredoxin]-dithiol = an alcohol + [thioredoxin]-disulfide + H2O. In terms of biological role, thiol-specific peroxidase that catalyzes the reduction of hydrogen peroxide and organic hydroperoxides to water and alcohols, respectively. Plays a role in cell protection against oxidative stress by detoxifying peroxides. In Staphylococcus aureus (strain MRSA252), this protein is Thiol peroxidase.